A 201-amino-acid polypeptide reads, in one-letter code: Protein GrpE (201 aa).

Belongs to the GrpE family. In terms of assembly, homodimer.

The protein resides in the cytoplasm. Participates actively in the response to hyperosmotic and heat shock by preventing the aggregation of stress-denatured proteins, in association with DnaK and GrpE. It is the nucleotide exchange factor for DnaK and may function as a thermosensor. Unfolded proteins bind initially to DnaJ; upon interaction with the DnaJ-bound protein, DnaK hydrolyzes its bound ATP, resulting in the formation of a stable complex. GrpE releases ADP from DnaK; ATP binding to DnaK triggers the release of the substrate protein, thus completing the reaction cycle. Several rounds of ATP-dependent interactions between DnaJ, DnaK and GrpE are required for fully efficient folding. The protein is Protein GrpE of Shewanella frigidimarina (strain NCIMB 400).